A 174-amino-acid chain; its full sequence is WAP four-disulfide core domain protein 2 (174 aa).

Residues 1–25 form the signal peptide; that stretch reads MPACRLCLLAAGLLLGLLLFTPISA. In terms of domain architecture, WAP 1 spans 29–74; it reads DAEKPGECPQLEPITDCVLECTLDKDCADNRKCCQAGCSSVCSKPN. Intrachain disulfides connect Cys-36/Cys-62, Cys-45/Cys-66, Cys-49/Cys-61, and Cys-55/Cys-70. The interval 68-117 is disordered; that stretch reads SVCSKPNGPSEGELSGTDTKLSETGTTTQSAGLDHTTKPPGGQVSTKPPA. Residues 83–98 are compositionally biased toward polar residues; that stretch reads GTDTKLSETGTTTQSA. One can recognise a WAP 2 domain in the interval 125–173; the sequence is VREKQGTCPSVDIPKLGLCEDQCQVDSQCSGNMKCCRNGCGKMACTTPK. Disulfide bonds link Cys-132-Cys-160, Cys-143-Cys-164, Cys-147-Cys-159, and Cys-153-Cys-169.

In terms of assembly, homotrimer; disulfide-linked.

It is found in the secreted. Broad range protease inhibitor. This is WAP four-disulfide core domain protein 2 (Wfdc2) from Mus musculus (Mouse).